The following is a 625-amino-acid chain: MERKEFKAESKRLLEMMVNSIYSQKEIFLRELISNASDAIDKIYYRALSDDSITFNKDDYFIKVTANKEDRTLTVSDTGIGMTKEELESNLGTIAKSGSLAFKTENESKDGHDIIGQFGVGFYSAFMVADKVTVTTKALGEESGYQWESTGADGYTILPIAKESVGTEIRLKLKENSEDESYDEFLEEYRLTSIIKKYSDFIRYPIKMDVTKRELKEGTEDEYEDVIEEQTINSMVPIWRKNKNELKDEDYTNFYHEKRYGFDQPLKHIHISVDGAVRYNAILFIPENIPFDYYTKEFEKGLELYSNGVLIMEKCPDLLPDYYSFVKGMVDSEDLSLNISREMLQHDRQLKLIAKNIKNKITSHLKTLLKDEREKFEQFYRSFGRQLKYGVYSDFGANKEDLQDLLLFYSSTEKKMVTLDEYVSRMKEDQPYIYYATGESYARIEKLPQTEMVADKGYEILYFTEDVDEFAIKMLASYKEKEFRSVSSGDLGFEDDEQKDTAADTDEQKELFEHMKTILDGKVKDVRASKRLKSHPVCLTAEGEVSIEMEKVLRAMPDNQNVQAEKVLEINVNHDVFDVLKASFESDKDKVDLYTKLLYNQALLIEGLPVEDPVAFSNDICKVMA.

Residues 1–341 are a; substrate-binding; the sequence is MERKEFKAES…SEDLSLNISR (341 aa). The segment at 342–551 is b; it reads EMLQHDRQLK…EGEVSIEMEK (210 aa). Positions 552-625 are c; sequence VLRAMPDNQN…FSNDICKVMA (74 aa).

This sequence belongs to the heat shock protein 90 family. Homodimer.

The protein localises to the cytoplasm. In terms of biological role, molecular chaperone. Has ATPase activity. This is Chaperone protein HtpG from Halalkalibacterium halodurans (strain ATCC BAA-125 / DSM 18197 / FERM 7344 / JCM 9153 / C-125) (Bacillus halodurans).